The primary structure comprises 453 residues: Cholecystokinin receptor (453 aa).

The Extracellular portion of the chain corresponds to 1–64 (MESLRSLSNI…ILDRKKPSPS (64 aa)). N9, N22, N30, N35, and N39 each carry an N-linked (GlcNAc...) asparagine glycan. A helical transmembrane segment spans residues 65–94 (DLNLWVRIVMYSVIFLLSVFGNTLIIIVLV). Over 95–104 (MNKRLRTITN) the chain is Cytoplasmic. Residues 105–131 (SFLLSLALSDLMVAVLCMPFTLIPNLM) traverse the membrane as a helical segment. Residues 132–142 (ENFIFGEVICR) lie on the Extracellular side of the membrane. A disulfide bridge links C141 with C223. Residues 143 to 164 (AAAYFMGLSVSVSTFNLVAISI) form a helical membrane-spanning segment. At 165 to 184 (ERYSAICNPLKSRVWQTRSH) the chain is on the cytoplasmic side. Residues 185–205 (AYRVIAATWVLSSIIMIPYLV) form a helical membrane-spanning segment. Residues 206 to 237 (YNKTVTFPMKDRRVGHQCRLVWPSKQVQQAWY) lie on the Extracellular side of the membrane. Residues 238–261 (VLLLTILFFIPGVVMIVAYGLISR) form a helical membrane-spanning segment. The Cytoplasmic portion of the chain corresponds to 262–343 (ELYRGIQFEM…KLMAKKRVIR (82 aa)). Residues 344–364 (MLIVIVAMFFICWMPIFVANT) form a helical membrane-spanning segment. Topologically, residues 365-379 (WKAFDELSAFNTLTG) are extracellular. The helical transmembrane segment at 380–403 (APISFIHLLSYTSACVNPLIYCFM) threads the bilayer. C401 carries the S-palmitoyl cysteine lipid modification. The Cytoplasmic segment spans residues 404 to 453 (NKRFRKAFLGTFSSCIKPCRNFRDTDEDIAATGASLSKFSYTTVSSLGPA).

Belongs to the G-protein coupled receptor 1 family. As to expression, brain and stomach.

The protein resides in the cell membrane. In terms of biological role, receptor for cholecystokinin. This receptor mediates its action by association with G proteins that activate a phosphatidylinositol-calcium second messenger system. Has high affinity for CCK-8 and low affinities for gastrin-17-I, CCK-4, and unsulfated CCK-8. The polypeptide is Cholecystokinin receptor (cckar) (Xenopus laevis (African clawed frog)).